We begin with the raw amino-acid sequence, 511 residues long: Bifunctional purine biosynthesis protein PurH (511 aa).

The 145-residue stretch at 1–145 (MKKRALVSVS…KNHKFVSVIV (145 aa)) folds into the MGS-like domain.

This sequence belongs to the PurH family.

It carries out the reaction (6R)-10-formyltetrahydrofolate + 5-amino-1-(5-phospho-beta-D-ribosyl)imidazole-4-carboxamide = 5-formamido-1-(5-phospho-D-ribosyl)imidazole-4-carboxamide + (6S)-5,6,7,8-tetrahydrofolate. The enzyme catalyses IMP + H2O = 5-formamido-1-(5-phospho-D-ribosyl)imidazole-4-carboxamide. The protein operates within purine metabolism; IMP biosynthesis via de novo pathway; 5-formamido-1-(5-phospho-D-ribosyl)imidazole-4-carboxamide from 5-amino-1-(5-phospho-D-ribosyl)imidazole-4-carboxamide (10-formyl THF route): step 1/1. It functions in the pathway purine metabolism; IMP biosynthesis via de novo pathway; IMP from 5-formamido-1-(5-phospho-D-ribosyl)imidazole-4-carboxamide: step 1/1. The chain is Bifunctional purine biosynthesis protein PurH from Bacillus mycoides (strain KBAB4) (Bacillus weihenstephanensis).